A 101-amino-acid chain; its full sequence is Small ribosomal subunit protein uS14 (101 aa).

Belongs to the universal ribosomal protein uS14 family. As to quaternary structure, part of the 30S ribosomal subunit. Contacts proteins S3 and S10.

In terms of biological role, binds 16S rRNA, required for the assembly of 30S particles and may also be responsible for determining the conformation of the 16S rRNA at the A site. In Pseudomonas putida (strain ATCC 47054 / DSM 6125 / CFBP 8728 / NCIMB 11950 / KT2440), this protein is Small ribosomal subunit protein uS14.